The sequence spans 285 residues: GPN-loop GTPase 3 (285 aa).

13–18 (GSGKST) serves as a coordination point for GTP. Residues 72 to 74 (GPN) carry the Gly-Pro-Asn (GPN)-loop; involved in dimer interface motif. A GTP-binding site is contributed by 174–177 (TKMD). The tract at residues 262–285 (EPKEVDEEPSNSNFDAFFQDTADS) is disordered.

The protein belongs to the GPN-loop GTPase family. As to quaternary structure, heterodimer with gpn1. Binds to RNA polymerase II (RNAPII).

Functionally, small GTPase required for proper localization of RNA polymerase II (RNAPII). May act at an RNAP assembly step prior to nuclear import. This chain is GPN-loop GTPase 3, found in Danio rerio (Zebrafish).